The following is a 181-amino-acid chain: Large ribosomal subunit protein uL6 (181 aa).

Belongs to the universal ribosomal protein uL6 family. In terms of assembly, part of the 50S ribosomal subunit.

This protein binds to the 23S rRNA, and is important in its secondary structure. It is located near the subunit interface in the base of the L7/L12 stalk, and near the tRNA binding site of the peptidyltransferase center. The sequence is that of Large ribosomal subunit protein uL6 from Phytoplasma mali (strain AT).